The sequence spans 146 residues: uncharacterized protein (146 aa).

The span at 119–128 shows a compositional bias: basic and acidic residues; that stretch reads AQADLEHEES. The tract at residues 119–146 is disordered; sequence AQADLEHEESASIDQDEMVAIETRKTKK.

This is an uncharacterized protein from Schizosaccharomyces pombe (strain 972 / ATCC 24843) (Fission yeast).